A 523-amino-acid chain; its full sequence is NADP-specific glutamate dehydrogenase (523 aa).

The disordered stretch occupies residues 26–50 (CARGRSAKRDVAAKRLRSRSPRMDA). The active site involves K202.

This sequence belongs to the Glu/Leu/Phe/Val dehydrogenases family. As to quaternary structure, homo- and heterohexamer of alpha and beta subunits. Both subunits are encoded by the same gene. Post-translationally, the N-termini of the alpha and the beta chains are blocked.

Its subcellular location is the plastid. It is found in the chloroplast. The enzyme catalyses L-glutamate + NADP(+) + H2O = 2-oxoglutarate + NH4(+) + NADPH + H(+). The polypeptide is NADP-specific glutamate dehydrogenase (Chlorella sorokiniana (Freshwater green alga)).